The sequence spans 361 residues: L-threonine 3-dehydrogenase (361 aa).

A Zn(2+)-binding site is contributed by cysteine 38. Active-site charge relay system residues include threonine 40 and histidine 43. Residues histidine 63, glutamate 64, cysteine 93, cysteine 96, cysteine 99, and cysteine 107 each coordinate Zn(2+). Residues isoleucine 175, aspartate 195, arginine 200, 262 to 264, and 286 to 287 contribute to the NAD(+) site; these read LGI and IY.

This sequence belongs to the zinc-containing alcohol dehydrogenase family. As to quaternary structure, homotetramer. Requires Zn(2+) as cofactor.

It localises to the cytoplasm. The catalysed reaction is L-threonine + NAD(+) = (2S)-2-amino-3-oxobutanoate + NADH + H(+). The protein operates within amino-acid degradation; L-threonine degradation via oxydo-reductase pathway; glycine from L-threonine: step 1/2. Functionally, catalyzes the NAD(+)-dependent oxidation of L-threonine to 2-amino-3-ketobutyrate. In Pectobacterium atrosepticum (strain SCRI 1043 / ATCC BAA-672) (Erwinia carotovora subsp. atroseptica), this protein is L-threonine 3-dehydrogenase.